The sequence spans 50 residues: Photosystem II reaction center protein K (50 aa).

Positions Met-1–Gly-13 are excised as a propeptide. A helical transmembrane segment spans residues Ile-25 to Ala-45.

Belongs to the PsbK family. In terms of assembly, PSII is composed of 1 copy each of membrane proteins PsbA, PsbB, PsbC, PsbD, PsbE, PsbF, PsbH, PsbI, PsbJ, PsbK, PsbL, PsbM, PsbT, PsbY, PsbZ, Psb30/Ycf12, at least 3 peripheral proteins of the oxygen-evolving complex and a large number of cofactors. It forms dimeric complexes.

It is found in the plastid. The protein localises to the chloroplast thylakoid membrane. Its function is as follows. One of the components of the core complex of photosystem II (PSII). PSII is a light-driven water:plastoquinone oxidoreductase that uses light energy to abstract electrons from H(2)O, generating O(2) and a proton gradient subsequently used for ATP formation. It consists of a core antenna complex that captures photons, and an electron transfer chain that converts photonic excitation into a charge separation. The protein is Photosystem II reaction center protein K of Euglena myxocylindracea.